A 609-amino-acid polypeptide reads, in one-letter code: DNA-directed RNA polymerase subunit beta' (609 aa).

Residues Cys-67, Cys-69, Cys-82, and Cys-85 each coordinate Zn(2+). 3 residues coordinate Mg(2+): Asp-460, Asp-462, and Asp-464.

The protein belongs to the RNA polymerase beta' chain family. RpoC1 subfamily. As to quaternary structure, in plastids the minimal PEP RNA polymerase catalytic core is composed of four subunits: alpha, beta, beta', and beta''. When a (nuclear-encoded) sigma factor is associated with the core the holoenzyme is formed, which can initiate transcription. Requires Mg(2+) as cofactor. Zn(2+) serves as cofactor.

The protein resides in the plastid. Its subcellular location is the chloroplast. It carries out the reaction RNA(n) + a ribonucleoside 5'-triphosphate = RNA(n+1) + diphosphate. Its function is as follows. DNA-dependent RNA polymerase catalyzes the transcription of DNA into RNA using the four ribonucleoside triphosphates as substrates. This chain is DNA-directed RNA polymerase subunit beta', found in Emiliania huxleyi (Coccolithophore).